Reading from the N-terminus, the 475-residue chain is Ankyrin repeat, SAM and basic leucine zipper domain-containing protein 1 (475 aa).

The tract at residues 1–25 (MAAGALRGLPVAGGGESSESEDDGW) is disordered. Residues Ser-17, Ser-18, and Ser-20 each carry the phosphoserine modification. 6 ANK repeats span residues 45-74 (EKKE…SVDS), 78-107 (YGWT…NASF), 110-144 (DKQS…DPNV), 148-177 (RLMT…EVNT), 181-210 (NGYT…NKML), and 214-243 (DGKM…PLEG). The region spanning 272–334 (SYTAFGDLEV…KILAALKELQ (63 aa)) is the SAM domain.

Interacts with DDX4, PIWIL1, RANBP9 and TDRD1.

Its subcellular location is the cytoplasm. Plays a central role during spermatogenesis by repressing transposable elements and preventing their mobilization, which is essential for the germline integrity. Acts via the piRNA metabolic process, which mediates the repression of transposable elements during meiosis by forming complexes composed of piRNAs and Piwi proteins and governs the methylation and subsequent repression of transposons. Its association with pi-bodies suggests a participation in the primary piRNAs metabolic process. Required prior to the pachytene stage to facilitate the production of multiple types of piRNAs, including those associated with repeats involved in the regulation of retrotransposons. May act by mediating protein-protein interactions during germ cell maturation. The chain is Ankyrin repeat, SAM and basic leucine zipper domain-containing protein 1 (ASZ1) from Nomascus leucogenys (Northern white-cheeked gibbon).